Consider the following 824-residue polypeptide: Molybdenum cofactor sulfurase (824 aa).

An N6-(pyridoxal phosphate)lysine modification is found at Lys-274. Residue Cys-433 is part of the active site. One can recognise an MOSC domain in the interval 655–822; that stretch reads CSSSKYRSCT…LQVGQQVYPS (168 aa).

It belongs to the class-V pyridoxal-phosphate-dependent aminotransferase family. MOCOS subfamily. It depends on pyridoxal 5'-phosphate as a cofactor.

It carries out the reaction Mo-molybdopterin + L-cysteine + AH2 = thio-Mo-molybdopterin + L-alanine + A + H2O. Its pathway is cofactor biosynthesis; molybdopterin biosynthesis. In terms of biological role, sulfurates the molybdenum cofactor. Sulfation of molybdenum is essential for xanthine dehydrogenase (XDH) and aldehyde oxidase (ADO) enzymes in which molybdenum cofactor is liganded by 1 oxygen and 1 sulfur atom in active form. This chain is Molybdenum cofactor sulfurase (MCSU3), found in Oryza sativa subsp. japonica (Rice).